A 397-amino-acid polypeptide reads, in one-letter code: Cytochrome b (397 aa).

4 consecutive transmembrane segments (helical) span residues 38–58 (FGSL…FLAM), 82–104 (WLLR…LHIF), 119–139 (VWCL…IGYV), and 185–205 (FFSL…LHLA). Residues His-88 and His-102 each coordinate heme b. His-189 and His-203 together coordinate heme b. Position 208 (His-208) interacts with a ubiquinone. Helical transmembrane passes span 231–251 (FYVK…IWIF), 295–315 (AGGV…PFFK), 327–347 (IYQG…WIGC), and 354–373 (FVTI…AITP).

This sequence belongs to the cytochrome b family. In terms of assembly, the main subunits of complex b-c1 are: cytochrome b, cytochrome c1 and the Rieske protein. Heme b is required as a cofactor.

The protein resides in the mitochondrion inner membrane. In terms of biological role, component of the ubiquinol-cytochrome c reductase complex (complex III or cytochrome b-c1 complex) that is part of the mitochondrial respiratory chain. The b-c1 complex mediates electron transfer from ubiquinol to cytochrome c. Contributes to the generation of a proton gradient across the mitochondrial membrane that is then used for ATP synthesis. The protein is Cytochrome b (MT-CYB) of Oryza sativa subsp. japonica (Rice).